Reading from the N-terminus, the 558-residue chain is uncharacterized protein (558 aa).

A disordered region spans residues 531-558 (NEDDGTSASPTAMTFDMPPEHPFYSHYR).

This is an uncharacterized protein from Saccharomyces cerevisiae (strain ATCC 204508 / S288c) (Baker's yeast).